We begin with the raw amino-acid sequence, 449 residues long: Xylose isomerase (449 aa).

Active-site residues include His103 and Asp106. Mg(2+) contacts are provided by Glu234, Glu270, His273, Asp298, Asp309, Asp311, and Asp342.

The protein belongs to the xylose isomerase family. In terms of assembly, homotetramer. It depends on Mg(2+) as a cofactor.

The protein resides in the cytoplasm. It carries out the reaction alpha-D-xylose = alpha-D-xylulofuranose. In terms of biological role, involved in D-xylose catabolism. This Lactiplantibacillus pentosus (Lactobacillus pentosus) protein is Xylose isomerase (xylA).